The chain runs to 393 residues: Aspartate aminotransferase (393 aa).

Residues Gly-38, Trp-124, and Asn-174 each contribute to the L-aspartate site. Residue Lys-237 is modified to N6-(pyridoxal phosphate)lysine.

The protein belongs to the class-I pyridoxal-phosphate-dependent aminotransferase family. In terms of assembly, homodimer. Requires pyridoxal 5'-phosphate as cofactor.

It localises to the cytoplasm. The enzyme catalyses L-aspartate + 2-oxoglutarate = oxaloacetate + L-glutamate. This is Aspartate aminotransferase (aspB) from Bacillus subtilis (strain 168).